A 485-amino-acid polypeptide reads, in one-letter code: Zinc finger protein 639 (485 aa).

The span at 1–14 (MSEYPKKRKRKTLH) shows a compositional bias: basic residues. 2 disordered regions span residues 1–23 (MSEY…DSSG) and 54–82 (DNKD…SRSQ). Ser-60 is modified (phosphoserine). A Glycyl lysine isopeptide (Lys-Gly) (interchain with G-Cter in SUMO2) cross-link involves residue Lys-76. The residue at position 88 (Ser-88) is a Phosphoserine. Glycyl lysine isopeptide (Lys-Gly) (interchain with G-Cter in SUMO2) cross-links involve residues Lys-177, Lys-181, and Lys-226. 8 consecutive C2H2-type zinc fingers follow at residues 204-227 (YKCE…ILKH), 233-255 (NVCR…AKLH), 260-283 (YICK…ADTH), 289-311 (YWCE…FQEH), 374-397 (FVCQ…AIEH), 403-425 (HVCD…LNSH), 431-454 (YLCQ…DFKH), and 460-482 (HKCS…LPVH). The interval 371–455 (KNFFVCQVCG…LKIHLDFKHS (85 aa)) is interaction with CTNNA2.

Belongs to the krueppel C2H2-type zinc-finger protein family. In terms of assembly, interacts with CTNNA2.

The protein resides in the nucleus. Its function is as follows. Binds DNA and may function as a transcriptional repressor. The chain is Zinc finger protein 639 (Znf639) from Rattus norvegicus (Rat).